The following is a 117-amino-acid chain: Anti-adapter protein IraM (117 aa).

The protein belongs to the IraM/RssC family.

The protein localises to the cytoplasm. Its function is as follows. Involved in the stabilization of the sigma stress factor RpoS. The polypeptide is Anti-adapter protein IraM (Klebsiella pneumoniae (strain 342)).